A 197-amino-acid chain; its full sequence is Probable GTP-binding protein EngB (197 aa).

The region spanning 22-195 (ALPELALVGR…WQWIEERTGV (174 aa)) is the EngB-type G domain. GTP-binding positions include 30-37 (GRSNVGKS), 57-61 (GKTQT), 75-78 (DVPG), 142-145 (TKVD), and 174-176 (FSA). Mg(2+) contacts are provided by Ser-37 and Thr-59.

Belongs to the TRAFAC class TrmE-Era-EngA-EngB-Septin-like GTPase superfamily. EngB GTPase family. Requires Mg(2+) as cofactor.

Necessary for normal cell division and for the maintenance of normal septation. In Limosilactobacillus fermentum (strain NBRC 3956 / LMG 18251) (Lactobacillus fermentum), this protein is Probable GTP-binding protein EngB.